The following is a 462-amino-acid chain: Fumarate hydratase class II (462 aa).

Substrate-binding positions include 97 to 99 (SGT), 127 to 130 (HPND), 137 to 139 (SSN), and T185. Catalysis depends on H186, which acts as the Proton donor/acceptor. Residue S316 is part of the active site. Substrate is bound by residues S317 and 322-324 (KVN).

The protein belongs to the class-II fumarase/aspartase family. Fumarase subfamily. As to quaternary structure, homotetramer.

It localises to the cytoplasm. The catalysed reaction is (S)-malate = fumarate + H2O. It participates in carbohydrate metabolism; tricarboxylic acid cycle; (S)-malate from fumarate: step 1/1. Its function is as follows. Involved in the TCA cycle. Catalyzes the stereospecific interconversion of fumarate to L-malate. In Bacillus cereus (strain ATCC 14579 / DSM 31 / CCUG 7414 / JCM 2152 / NBRC 15305 / NCIMB 9373 / NCTC 2599 / NRRL B-3711), this protein is Fumarate hydratase class II.